The sequence spans 150 residues: UPF0178 protein PputW619_5044 (150 aa).

The protein belongs to the UPF0178 family.

In Pseudomonas putida (strain W619), this protein is UPF0178 protein PputW619_5044.